The sequence spans 242 residues: MVQEMLGGTRITYLGHATFRLTTPGGENILIDPFLADNPQTPEELKQVGDLDTILVTHGHFDHFADAIPVARQTGATVVANFEISSYVQSQGIENSMPLNKGGTARVGGVKVTGTNAFHASSIQTEDGSTIYGGEPMGFVVEFESGFKVYHAGDTAVFGDMRLIGELYGPDLALLPIGDRVVMSPFEAAHAARLLGVRHVVPMHYGTFPFLPGTPEEFERHARELGLELEIHVMKPGEELGS.

The protein belongs to the UPF0173 family.

In Rubrobacter xylanophilus (strain DSM 9941 / JCM 11954 / NBRC 16129 / PRD-1), this protein is UPF0173 metal-dependent hydrolase Rxyl_1261.